Consider the following 227-residue polypeptide: Cytidylate kinase (227 aa).

An ATP-binding site is contributed by 10–18 (GPASSGKST).

Belongs to the cytidylate kinase family. Type 1 subfamily.

The protein localises to the cytoplasm. It catalyses the reaction CMP + ATP = CDP + ADP. The enzyme catalyses dCMP + ATP = dCDP + ADP. The chain is Cytidylate kinase from Streptococcus agalactiae serotype III (strain NEM316).